The sequence spans 90 residues: U7-theraphotoxin-Hhn1j (90 aa).

The N-terminal stretch at 1–19 is a signal peptide; sequence MKTAIFTVVLALAVFAVLS. Residues 20 to 50 constitute a propeptide that is removed on maturation; the sequence is FGWEANEKALSEEFTELIHEKEAASETEARE. Cystine bridges form between Cys51/Cys65, Cys58/Cys70, and Cys64/Cys81.

It belongs to the neurotoxin 10 (Hwtx-1) family. 13 (Hntx-13) subfamily. In terms of tissue distribution, expressed by the venom gland.

It is found in the secreted. Ion channel inhibitor. This is U7-theraphotoxin-Hhn1j from Cyriopagopus hainanus (Chinese bird spider).